A 236-amino-acid chain; its full sequence is Factor V activator RVV-V alpha (236 aa).

In terms of domain architecture, Peptidase S1 spans 1-227 (VVGGDECNIN…YNNWIQNIIA (227 aa)). Intrachain disulfides connect Cys-7–Cys-141, Cys-28–Cys-44, Cys-76–Cys-234, Cys-120–Cys-188, Cys-152–Cys-167, and Cys-178–Cys-203. Catalysis depends on charge relay system residues His-43 and Asp-88. The active-site Charge relay system is the Ser-182. The N-linked (GlcNAc...) asparagine glycan is linked to Asn-229.

Belongs to the peptidase S1 family. Snake venom subfamily. As to quaternary structure, monomer. As to expression, expressed by the venom gland.

The protein localises to the secreted. The enzyme catalyses Fully activates human clotting factor V by a single cleavage at the 1545-Trp-Tyr-Leu-Arg-|-Ser-Asn-Asn-Gly-1552 bond. Cattle, but not rabbit, factor V is cleaved, and no other proteins of the clotting system are attacked. Esterase activity is observed on Bz-Arg-OEt and Tos-Arg-OMe, and amidase activity on Phe-pipecolyl-Arg-NHPhNO2.. Its activity is regulated as follows. Inhibited by D-Phe-Pro-Arg-chloromethyl ketone (FPRCK) (97%), PMSF (76%), and benzamidine (50%). Is not inhibited by BPTI, antithrombin and EDTA. Functionally, venom serine protease that activates factor V (F5) in a calcium-independent manner. It cleaves the Arg(1545)-Ser(1546) linkage in the human factor V molecule. Induces the coagulation of mammalian plasma. In Daboia siamensis (Eastern Russel's viper), this protein is Factor V activator RVV-V alpha.